Reading from the N-terminus, the 99-residue chain is MFAIIKTGGRQLKVEKDQTIFVEKIDKNEGETITFTDILFINGKIGTPYVENASVTGIIEKQGKAKKIVVYRHNPKSTHKRKLGHRQLFTKVKITELKG.

It belongs to the bacterial ribosomal protein bL21 family. As to quaternary structure, part of the 50S ribosomal subunit. Contacts protein L20.

This protein binds to 23S rRNA in the presence of protein L20. The polypeptide is Large ribosomal subunit protein bL21 (Mesomycoplasma hyopneumoniae (strain 7448) (Mycoplasma hyopneumoniae)).